The chain runs to 302 residues: Sulfate adenylyltransferase subunit 2 (302 aa).

This sequence belongs to the PAPS reductase family. CysD subfamily. In terms of assembly, heterodimer composed of CysD, the smaller subunit, and CysN.

It carries out the reaction sulfate + ATP + H(+) = adenosine 5'-phosphosulfate + diphosphate. It functions in the pathway sulfur metabolism; hydrogen sulfide biosynthesis; sulfite from sulfate: step 1/3. In terms of biological role, with CysN forms the ATP sulfurylase (ATPS) that catalyzes the adenylation of sulfate producing adenosine 5'-phosphosulfate (APS) and diphosphate, the first enzymatic step in sulfur assimilation pathway. APS synthesis involves the formation of a high-energy phosphoric-sulfuric acid anhydride bond driven by GTP hydrolysis by CysN coupled to ATP hydrolysis by CysD. The protein is Sulfate adenylyltransferase subunit 2 of Psychromonas ingrahamii (strain DSM 17664 / CCUG 51855 / 37).